A 379-amino-acid polypeptide reads, in one-letter code: Cytochrome b (379 aa).

4 consecutive transmembrane segments (helical) span residues 33 to 53, 77 to 98, 113 to 133, and 178 to 198; these read FGSL…FLAM, WLIR…SIHA, WNIG…GYVL, and FFAF…VHLL. Residues histidine 83 and histidine 97 each contribute to the heme b site. Histidine 182 and histidine 196 together coordinate heme b. Position 201 (histidine 201) interacts with a ubiquinone. Transmembrane regions (helical) follow at residues 226 to 246, 288 to 308, 320 to 340, and 347 to 367; these read IKDL…ALFF, LGGV…PLLN, ITQT…WIGG, and FTMI…ILMP.

It belongs to the cytochrome b family. In terms of assembly, the cytochrome bc1 complex contains 11 subunits: 3 respiratory subunits (MT-CYB, CYC1 and UQCRFS1), 2 core proteins (UQCRC1 and UQCRC2) and 6 low-molecular weight proteins (UQCRH/QCR6, UQCRB/QCR7, UQCRQ/QCR8, UQCR10/QCR9, UQCR11/QCR10 and a cleavage product of UQCRFS1). This cytochrome bc1 complex then forms a dimer. Heme b serves as cofactor.

Its subcellular location is the mitochondrion inner membrane. Its function is as follows. Component of the ubiquinol-cytochrome c reductase complex (complex III or cytochrome b-c1 complex) that is part of the mitochondrial respiratory chain. The b-c1 complex mediates electron transfer from ubiquinol to cytochrome c. Contributes to the generation of a proton gradient across the mitochondrial membrane that is then used for ATP synthesis. This is Cytochrome b (MT-CYB) from Thaptomys nigrita (Blackish grass mouse).